The following is a 159-amino-acid chain: ATP synthase subunit b 2 (159 aa).

The chain crosses the membrane as a helical span at residues 1–21 (MDATFWAFIALVIFVAIVVYM).

This sequence belongs to the ATPase B chain family. As to quaternary structure, F-type ATPases have 2 components, F(1) - the catalytic core - and F(0) - the membrane proton channel. F(1) has five subunits: alpha(3), beta(3), gamma(1), delta(1), epsilon(1). F(0) has three main subunits: a(1), b(2) and c(10-14). The alpha and beta chains form an alternating ring which encloses part of the gamma chain. F(1) is attached to F(0) by a central stalk formed by the gamma and epsilon chains, while a peripheral stalk is formed by the delta and b chains.

It localises to the cell inner membrane. F(1)F(0) ATP synthase produces ATP from ADP in the presence of a proton or sodium gradient. F-type ATPases consist of two structural domains, F(1) containing the extramembraneous catalytic core and F(0) containing the membrane proton channel, linked together by a central stalk and a peripheral stalk. During catalysis, ATP synthesis in the catalytic domain of F(1) is coupled via a rotary mechanism of the central stalk subunits to proton translocation. In terms of biological role, component of the F(0) channel, it forms part of the peripheral stalk, linking F(1) to F(0). The sequence is that of ATP synthase subunit b 2 from Brucella abortus (strain S19).